We begin with the raw amino-acid sequence, 225 residues long: Sodium-dependent neutral amino acid transporter SLC6A17 (225 aa).

Transmembrane regions (helical) follow at residues 1–8 (NVWRFPYL), 16–35 (AYLV…LFFL), and 60–80 (GIGF…NVII). The Extracellular portion of the chain corresponds to 81-143 (GWSIFYFFKS…NSISESGGLN (63 aa)). N-linked (GlcNAc...) asparagine glycosylation occurs at N105. 3 helical membrane passes run 144–162 (WKMT…MAVV), 171–188 (VMYF…CFLV), and 224–225 (IF).

Belongs to the sodium:neurotransmitter symporter (SNF) (TC 2.A.22) family.

Its subcellular location is the cytoplasmic vesicle. The protein localises to the secretory vesicle. It is found in the synaptic vesicle membrane. It localises to the postsynapse. The protein resides in the presynapse. It catalyses the reaction L-proline(in) + Na(+)(in) = L-proline(out) + Na(+)(out). It carries out the reaction L-leucine(in) + Na(+)(in) = L-leucine(out) + Na(+)(out). The catalysed reaction is glycine(in) + Na(+)(in) = glycine(out) + Na(+)(out). The enzyme catalyses L-alanine(in) + Na(+)(in) = L-alanine(out) + Na(+)(out). It catalyses the reaction L-glutamine(in) + Na(+)(in) = L-glutamine(out) + Na(+)(out). Synaptic vesicle transporter with apparent selectivity for neutral amino acids. The transport is sodium-coupled but chloride-independent, likely driven by the proton electrochemical gradient generated by vacuolar H(+)-ATPase in an overall electrogenic mechanism. May contribute to the synaptic uptake of neurotransmitter precursors in a process coupled in part to vesicle exocytosis. This is Sodium-dependent neutral amino acid transporter SLC6A17 from Bos taurus (Bovine).